The sequence spans 248 residues: UDP-2,3-diacylglucosamine hydrolase (248 aa).

Mn(2+) is bound by residues Asp7, His9, Asp40, Asn78, and His113. 78-79 (NR) lines the substrate pocket. Substrate is bound by residues Asp121, Ser159, Thr163, Lys166, and His194. Mn(2+)-binding residues include His194 and His196.

The protein belongs to the LpxH family. Mn(2+) is required as a cofactor.

The protein resides in the cell inner membrane. The enzyme catalyses UDP-2-N,3-O-bis[(3R)-3-hydroxytetradecanoyl]-alpha-D-glucosamine + H2O = 2-N,3-O-bis[(3R)-3-hydroxytetradecanoyl]-alpha-D-glucosaminyl 1-phosphate + UMP + 2 H(+). Its pathway is glycolipid biosynthesis; lipid IV(A) biosynthesis; lipid IV(A) from (3R)-3-hydroxytetradecanoyl-[acyl-carrier-protein] and UDP-N-acetyl-alpha-D-glucosamine: step 4/6. Hydrolyzes the pyrophosphate bond of UDP-2,3-diacylglucosamine to yield 2,3-diacylglucosamine 1-phosphate (lipid X) and UMP by catalyzing the attack of water at the alpha-P atom. Involved in the biosynthesis of lipid A, a phosphorylated glycolipid that anchors the lipopolysaccharide to the outer membrane of the cell. This Pseudomonas savastanoi pv. phaseolicola (strain 1448A / Race 6) (Pseudomonas syringae pv. phaseolicola (strain 1448A / Race 6)) protein is UDP-2,3-diacylglucosamine hydrolase.